Here is a 473-residue protein sequence, read N- to C-terminus: Adenosylhomocysteinase (473 aa).

Positions 60, 135, and 197 each coordinate substrate. Position 198–200 (198–200 (TTT)) interacts with NAD(+). Residues K227 and D231 each contribute to the substrate site. NAD(+)-binding positions include N232, 261-266 (GFGDVG), E284, N319, 340-342 (IGH), and N385.

This sequence belongs to the adenosylhomocysteinase family. It depends on NAD(+) as a cofactor.

The protein resides in the cytoplasm. The enzyme catalyses S-adenosyl-L-homocysteine + H2O = L-homocysteine + adenosine. Its pathway is amino-acid biosynthesis; L-homocysteine biosynthesis; L-homocysteine from S-adenosyl-L-homocysteine: step 1/1. Functionally, may play a key role in the regulation of the intracellular concentration of adenosylhomocysteine. The polypeptide is Adenosylhomocysteinase (Bradyrhizobium diazoefficiens (strain JCM 10833 / BCRC 13528 / IAM 13628 / NBRC 14792 / USDA 110)).